The chain runs to 255 residues: Small ribosomal subunit protein eS1B (255 aa).

Ala-2 is subject to N-acetylalanine; partial. Ser-245 bears the Phosphoserine mark. Lys-248 participates in a covalent cross-link: Glycyl lysine isopeptide (Lys-Gly) (interchain with G-Cter in ubiquitin). Thr-254 is modified (phosphothreonine).

Belongs to the eukaryotic ribosomal protein eS1 family. Component of the small ribosomal subunit. Mature ribosomes consist of a small (40S) and a large (60S) subunit. The 40S subunit contains about 33 different proteins and 1 molecule of RNA (18S). The 60S subunit contains about 49 different proteins and 3 molecules of RNA (25S, 5.8S and 5S).

The protein localises to the cytoplasm. In Saccharomyces cerevisiae (strain RM11-1a) (Baker's yeast), this protein is Small ribosomal subunit protein eS1B.